We begin with the raw amino-acid sequence, 377 residues long: UDP-N-acetylglucosamine--N-acetylmuramyl-(pentapeptide) pyrophosphoryl-undecaprenol N-acetylglucosamine transferase (377 aa).

UDP-N-acetyl-alpha-D-glucosamine-binding positions include 11-13 (TGG), Asn-123, Arg-164, Ser-194, and Gln-295.

It belongs to the glycosyltransferase 28 family. MurG subfamily.

The protein localises to the cell inner membrane. The enzyme catalyses di-trans,octa-cis-undecaprenyl diphospho-N-acetyl-alpha-D-muramoyl-L-alanyl-D-glutamyl-meso-2,6-diaminopimeloyl-D-alanyl-D-alanine + UDP-N-acetyl-alpha-D-glucosamine = di-trans,octa-cis-undecaprenyl diphospho-[N-acetyl-alpha-D-glucosaminyl-(1-&gt;4)]-N-acetyl-alpha-D-muramoyl-L-alanyl-D-glutamyl-meso-2,6-diaminopimeloyl-D-alanyl-D-alanine + UDP + H(+). It functions in the pathway cell wall biogenesis; peptidoglycan biosynthesis. In terms of biological role, cell wall formation. Catalyzes the transfer of a GlcNAc subunit on undecaprenyl-pyrophosphoryl-MurNAc-pentapeptide (lipid intermediate I) to form undecaprenyl-pyrophosphoryl-MurNAc-(pentapeptide)GlcNAc (lipid intermediate II). The protein is UDP-N-acetylglucosamine--N-acetylmuramyl-(pentapeptide) pyrophosphoryl-undecaprenol N-acetylglucosamine transferase of Opitutus terrae (strain DSM 11246 / JCM 15787 / PB90-1).